The following is a 368-amino-acid chain: Peptide chain release factor 2 (368 aa).

Position 248 is an N5-methylglutamine (glutamine 248).

The protein belongs to the prokaryotic/mitochondrial release factor family. Methylated by PrmC. Methylation increases the termination efficiency of RF2.

It localises to the cytoplasm. Peptide chain release factor 2 directs the termination of translation in response to the peptide chain termination codons UGA and UAA. In Corynebacterium glutamicum (strain R), this protein is Peptide chain release factor 2.